A 117-amino-acid polypeptide reads, in one-letter code: Non-specific lipid-transfer protein 2B (117 aa).

Positions 1–25 are cleaved as a signal peptide; sequence MARAQLVLVALVAALLLAGPHTTMA. 4 disulfides stabilise this stretch: cysteine 29/cysteine 76, cysteine 39/cysteine 53, cysteine 54/cysteine 99, and cysteine 74/cysteine 113.

Belongs to the plant LTP family. Expressed in roots, mesocotyls and developing leaves.

In terms of biological role, plant non-specific lipid-transfer proteins transfer phospholipids as well as galactolipids across membranes. May play a role in wax or cutin deposition in the cell walls of expanding epidermal cells and certain secretory tissues. This Oryza sativa subsp. japonica (Rice) protein is Non-specific lipid-transfer protein 2B (LTP2-B).